The following is a 337-amino-acid chain: Lipoate-protein ligase A (337 aa).

Positions 29–216 constitute a BPL/LPL catalytic domain; sequence DQNQTILFLW…AFFNYYQTTV (188 aa). Residues Arg-71, 76-79, and Lys-134 each bind ATP; that span reads GAVF. Position 134 (Lys-134) interacts with (R)-lipoate.

Belongs to the LplA family. Monomer.

The protein localises to the cytoplasm. It carries out the reaction L-lysyl-[lipoyl-carrier protein] + (R)-lipoate + ATP = N(6)-[(R)-lipoyl]-L-lysyl-[lipoyl-carrier protein] + AMP + diphosphate + H(+). Its pathway is protein modification; protein lipoylation via exogenous pathway; protein N(6)-(lipoyl)lysine from lipoate: step 1/2. It functions in the pathway protein modification; protein lipoylation via exogenous pathway; protein N(6)-(lipoyl)lysine from lipoate: step 2/2. Its function is as follows. Catalyzes both the ATP-dependent activation of exogenously supplied lipoate to lipoyl-AMP and the transfer of the activated lipoyl onto the lipoyl domains of lipoate-dependent enzymes. The protein is Lipoate-protein ligase A of Blochmanniella floridana.